Consider the following 287-residue polypeptide: GTPase Era (287 aa).

Positions phenylalanine 6–lysine 178 constitute an Era-type G domain. Residues glycine 14–serine 21 are G1. Glycine 14 to serine 21 is a binding site for GTP. Residues histidine 40–serine 44 form a G2 region. A G3 region spans residues aspartate 62–glycine 65. Residues aspartate 62–isoleucine 66 and asparagine 124–aspartate 127 each bind GTP. The interval asparagine 124–aspartate 127 is G4. The interval isoleucine 154–glycine 156 is G5. Residues leucine 207 to lysine 282 enclose the KH type-2 domain.

This sequence belongs to the TRAFAC class TrmE-Era-EngA-EngB-Septin-like GTPase superfamily. Era GTPase family. In terms of assembly, monomer.

The protein resides in the cytoplasm. It localises to the cell membrane. An essential GTPase that binds both GDP and GTP, with rapid nucleotide exchange. Plays a role in 16S rRNA processing and 30S ribosomal subunit biogenesis and possibly also in cell cycle regulation and energy metabolism. This Buchnera aphidicola subsp. Baizongia pistaciae (strain Bp) protein is GTPase Era.